The following is a 215-amino-acid chain: Oligoribonuclease (215 aa).

The 166-residue stretch at 5 to 170 (LVWIDCEMTG…ADIHESIREL (166 aa)) folds into the Exonuclease domain. The active site involves Tyr127. The interval 196 to 215 (LGPPGKDAADTDSAAGHTTG) is disordered.

Belongs to the oligoribonuclease family.

It localises to the cytoplasm. Its function is as follows. 3'-to-5' exoribonuclease specific for small oligoribonucleotides. In Mycobacterium sp. (strain JLS), this protein is Oligoribonuclease.